A 239-amino-acid chain; its full sequence is Norbelladine 4'-O-methyltransferase 2 (239 aa).

S-adenosyl-L-methionine is bound by residues Val-55, Glu-77, 79–80, Ser-85, Asp-103, and Ala-132; that span reads GV. Asp-155 contacts a divalent metal cation. Asp-157 contacts S-adenosyl-L-methionine. Residues Asp-181 and Asn-182 each coordinate a divalent metal cation.

It belongs to the class I-like SAM-binding methyltransferase superfamily. Cation-dependent O-methyltransferase family. The cofactor is Mg(2+).

It carries out the reaction norbelladine + S-adenosyl-L-methionine = 4'-O-methylnorbelladine + S-adenosyl-L-homocysteine + H(+). The protein operates within alkaloid biosynthesis. 4'-O-methyltransferase converting norbelladine to 4'-O-methylnorbelladine. 4'-O-methylnorbelladine is a precursor to all Amaryllidaceae alkaloids such as galanthamine, lycorine and haemanthamine, and including haemanthamine- and crinamine-type alkaloids, promising anticancer agents. This Narcissus aff. pseudonarcissus MK-2014 (Daffodil) protein is Norbelladine 4'-O-methyltransferase 2.